Consider the following 531-residue polypeptide: Probable rhamnogalacturonate lyase A (531 aa).

An N-terminal signal peptide occupies residues 1 to 20; it reads MLSKALFFSSLPLWAKVASA. Disulfide bonds link Cys-50-Cys-93 and Cys-184-Cys-193. Asn-351 is a glycosylation site (N-linked (GlcNAc...) asparagine).

This sequence belongs to the polysaccharide lyase 4 family.

The protein resides in the secreted. The catalysed reaction is Endotype eliminative cleavage of L-alpha-rhamnopyranosyl-(1-&gt;4)-alpha-D-galactopyranosyluronic acid bonds of rhamnogalacturonan I domains in ramified hairy regions of pectin leaving L-rhamnopyranose at the reducing end and 4-deoxy-4,5-unsaturated D-galactopyranosyluronic acid at the non-reducing end.. Pectinolytic enzymes consist of four classes of enzymes: pectin lyase, polygalacturonase, pectin methylesterase and rhamnogalacturonase. Degrades the rhamnogalacturonan I (RG-I) backbone of pectin. The polypeptide is Probable rhamnogalacturonate lyase A (rglA) (Aspergillus terreus (strain NIH 2624 / FGSC A1156)).